The primary structure comprises 298 residues: MLAPLFAALLAGAATASPIQERQSSVPVGTIITACTVPNTFALTFDDGPFAYTSELLDLLSSNGVKATFFLNGQNWGSIYDYTSVVTRMDAEGHQIGSHTWSHADLATLDAAGITSQMTQLETALTSILGKVPTYMRPPYFSTNALALSTLGGLGYHVINANIDTLDYEHDDDTIGVAFTNFQNGLASGGTVSLMHDVHAQTVHVLVQEAINAIKAKGLTPVTVGTCLGDASANWYKSGGGSGTTPPPATGGPSPDDTCGGSNGYVCQNSQCCSQWGWCGTTSEYCAAGCQAAYGPCT.

Residues 1 to 16 (MLAPLFAALLAGAATA) form the signal peptide. Positions 39 to 222 (NTFALTFDDG…AIKAKGLTPV (184 aa)) constitute a NodB homology domain. Asp-46 functions as the Proton acceptor in the catalytic mechanism. Asp-46 lines the acetate pocket. Asp-47, His-99, and His-103 together coordinate Co(2+). Tyr-140 is an acetate binding site. His-196 (proton donor) is an active-site residue. The Chitin-binding type-1 domain occupies 256–298 (DDTCGGSNGYVCQNSQCCSQWGWCGTTSEYCAAGCQAAYGPCT). 4 cysteine pairs are disulfide-bonded: Cys-259/Cys-273, Cys-267/Cys-279, Cys-272/Cys-286, and Cys-290/Cys-297.

This sequence belongs to the polysaccharide deacetylase family. Co(2+) serves as cofactor.

It localises to the secreted. It catalyses the reaction [(1-&gt;4)-N-acetyl-beta-D-glucosaminyl](n) + n H2O = chitosan + n acetate. Its activity is regulated as follows. Inhibited by Fe(2+) and to a lesser extent by Mn(2+). Its function is as follows. Hydrolyzes the N-acetamido groups of N-acetyl-D-glucosamine polymers in chitin to form chitosan and acetate. May play a role in evasion of the host immune response; plant chitinases liberate chitin molecules from the fungal cell wall which act as elicitors of the plant immune response, deacetylation of the liberated chitin neutralizes elicitor activity. This Pestalotiopsis sp protein is Chitin deacetylase.